Consider the following 149-residue polypeptide: Calmodulin (149 aa).

Residue alanine 2 is modified to N-acetylalanine. 4 EF-hand domains span residues 8 to 43 (EQISEFKEAFSLFDKDGDGTITTKELGTVMRSLGQN), 44 to 79 (PTEAELQDMINEIDTDGNGTIDFPEFLTLMARKLKD), 81 to 116 (DTEEELIEAFRVFDRDGDGYISADELRHVMTNLGEK), and 117 to 149 (LTNEEVDEMIREADIDGDGQINYEEFVKMMIAK). Ca(2+) contacts are provided by aspartate 21, aspartate 23, aspartate 25, threonine 27, glutamate 32, aspartate 57, aspartate 59, asparagine 61, threonine 63, glutamate 68, aspartate 94, aspartate 96, aspartate 98, tyrosine 100, glutamate 105, aspartate 130, aspartate 132, aspartate 134, glutamine 136, and glutamate 141.

Belongs to the calmodulin family.

It is found in the cytoplasm. Functionally, calmodulin mediates the control of a large number of enzymes, ion channels and other proteins by Ca(2+). Among the enzymes to be stimulated by the calmodulin-Ca(2+) complex are a number of protein kinases and phosphatases. The chain is Calmodulin from Plasmodium falciparum (isolate 3D7).